A 558-amino-acid chain; its full sequence is Ankyrin repeat protein OPG189 (558 aa).

ANK repeat units follow at residues 65 to 95, 169 to 205, 209 to 239, 243 to 272, 276 to 304, 339 to 368, and 372 to 401; these read YGEN…NINK, YGCT…DVDK, YGNT…NIDS, NRYT…NVNA, FGTT…ELEI, YNET…DFET, and SGCT…SLKI.

It belongs to the orthopoxvirus OPG189 protein family.

Functionally, contributes to viral release without involving rearrangement of host actin. The sequence is that of Ankyrin repeat protein OPG189 (OPG189) from Vaccinia virus (strain Western Reserve) (VACV).